The sequence spans 91 residues: MKTLLLTLVVVTIMCLDLGYTTKCYVTPDVTSQTCPDGQNICYTETWCDAWCGSRGKRVNLGCAATCPKVNPGVDIICCSTDNCNPFPKRS.

Residues Met1–Thr21 form the signal peptide. 5 cysteine pairs are disulfide-bonded: Cys24–Cys42, Cys35–Cys63, Cys48–Cys52, Cys67–Cys78, and Cys79–Cys84.

The protein belongs to the three-finger toxin family. Long-chain subfamily. Type II alpha-neurotoxin sub-subfamily. In terms of tissue distribution, expressed by the venom gland.

The protein localises to the secreted. Functionally, binds with high affinity to muscular (alpha-1/CHRNA1) and neuronal (alpha-7/CHRNA7) nicotinic acetylcholine receptor (nAChR) and inhibits acetylcholine from binding to the receptor, thereby impairing neuromuscular and neuronal transmission. The chain is Long neurotoxin OH-56 from Ophiophagus hannah (King cobra).